The primary structure comprises 502 residues: Probable cytosol aminopeptidase (502 aa).

Mn(2+) is bound by residues lysine 270 and aspartate 275. The active site involves lysine 282. Aspartate 293, aspartate 352, and glutamate 354 together coordinate Mn(2+). Arginine 356 is an active-site residue.

It belongs to the peptidase M17 family. It depends on Mn(2+) as a cofactor.

It is found in the cytoplasm. The enzyme catalyses Release of an N-terminal amino acid, Xaa-|-Yaa-, in which Xaa is preferably Leu, but may be other amino acids including Pro although not Arg or Lys, and Yaa may be Pro. Amino acid amides and methyl esters are also readily hydrolyzed, but rates on arylamides are exceedingly low.. The catalysed reaction is Release of an N-terminal amino acid, preferentially leucine, but not glutamic or aspartic acids.. In terms of biological role, presumably involved in the processing and regular turnover of intracellular proteins. Catalyzes the removal of unsubstituted N-terminal amino acids from various peptides. This Buchnera aphidicola subsp. Schizaphis graminum (strain Sg) protein is Probable cytosol aminopeptidase.